The primary structure comprises 245 residues: Transmembrane and ubiquitin-like domain-containing protein 1 (245 aa).

Positions 2–30 are required to release iHOPS from membranes; the sequence is ALIEGVGDEVTVLFSVLACLLVLALAWVS. A helical membrane pass occupies residues 11-31; it reads VTVLFSVLACLLVLALAWVST. Over residues 34–51 the composition is skewed to polar residues; the sequence is TESTDPLPQSSGTTTPAQ. A disordered region spans residues 34-100; sequence TESTDPLPQS…ASTPPDSPQE (67 aa). Phosphoserine occurs at positions 73, 97, and 126. Residues 102–175 form the Ubiquitin-like domain; that stretch reads LLLRLKFLND…LHCHVSTRVG (74 aa). A run of 2 helical transmembrane segments spans residues 194-214 and 219-239; these read IGSL…YCQI and FFPL…SLLA.

In terms of assembly, interacts with EEF1A1, GRIA2, GRIP1. Interacts with CAMLG, TUBG1. Interacts with NPM1 and CDKN2A; TMUB1 can enhance interaction between NPM1 and CDKN2A and is proposed to bridge the proteins; proposed to be mediated by iHOPS. Interacts with ERLIN2 and AMFR; TMUB1 promotes the interaction of ERLIN2 with AMFR. Post-translationally, processed by regulated intramembrane proteolysis (RIP) in the N-terminus to release iHOPS from membranes.

The protein localises to the membrane. Its subcellular location is the postsynaptic cell membrane. It is found in the recycling endosome. The protein resides in the cytoplasm. It localises to the cytoskeleton. The protein localises to the microtubule organizing center. Its subcellular location is the centrosome. It is found in the nucleus. The protein resides in the nucleolus. Involved in sterol-regulated ubiquitination and degradation of HMG-CoA reductase HMGCR. Involved in positive regulation of AMPA-selective glutamate receptor GRIA2 recycling to the cell surface. Acts as a negative regulator of hepatocyte growth during regeneration. Functionally, may contribute to the regulation of translation during cell-cycle progression. May contribute to the regulation of cell proliferation. May be involved in centrosome assembly. Modulates stabilization and nucleolar localization of tumor suppressor CDKN2A and enhances association between CDKN2A and NPM1. This chain is Transmembrane and ubiquitin-like domain-containing protein 1 (Tmub1), found in Rattus norvegicus (Rat).